The primary structure comprises 225 residues: Phosphatidylserine decarboxylase proenzyme (225 aa).

The active-site Schiff-base intermediate with substrate; via pyruvic acid is Ser195. Pyruvic acid (Ser); by autocatalysis is present on Ser195.

Belongs to the phosphatidylserine decarboxylase family. PSD-A subfamily. In terms of assembly, heterodimer of a large membrane-associated beta subunit and a small pyruvoyl-containing alpha subunit. Pyruvate is required as a cofactor. Is synthesized initially as an inactive proenzyme. Formation of the active enzyme involves a self-maturation process in which the active site pyruvoyl group is generated from an internal serine residue via an autocatalytic post-translational modification. Two non-identical subunits are generated from the proenzyme in this reaction, and the pyruvate is formed at the N-terminus of the alpha chain, which is derived from the carboxyl end of the proenzyme. The post-translation cleavage follows an unusual pathway, termed non-hydrolytic serinolysis, in which the side chain hydroxyl group of the serine supplies its oxygen atom to form the C-terminus of the beta chain, while the remainder of the serine residue undergoes an oxidative deamination to produce ammonia and the pyruvoyl prosthetic group on the alpha chain.

Its subcellular location is the cell membrane. The catalysed reaction is a 1,2-diacyl-sn-glycero-3-phospho-L-serine + H(+) = a 1,2-diacyl-sn-glycero-3-phosphoethanolamine + CO2. It functions in the pathway phospholipid metabolism; phosphatidylethanolamine biosynthesis; phosphatidylethanolamine from CDP-diacylglycerol: step 2/2. Catalyzes the formation of phosphatidylethanolamine (PtdEtn) from phosphatidylserine (PtdSer). This chain is Phosphatidylserine decarboxylase proenzyme, found in Gluconacetobacter diazotrophicus (strain ATCC 49037 / DSM 5601 / CCUG 37298 / CIP 103539 / LMG 7603 / PAl5).